The following is a 41-amino-acid chain: Cytochrome b559 subunit beta (41 aa).

A helical membrane pass occupies residues 16-32; it reads WLAIHALAVPTVFFLGS. H20 contributes to the heme binding site.

Belongs to the PsbE/PsbF family. As to quaternary structure, heterodimer of an alpha subunit and a beta subunit. PSII is composed of 1 copy each of membrane proteins PsbA, PsbB, PsbC, PsbD, PsbE, PsbF, PsbH, PsbI, PsbJ, PsbK, PsbL, PsbM, PsbT, PsbX, PsbY, PsbZ, Psb30/Ycf12, at least 3 peripheral proteins of the oxygen-evolving complex and a large number of cofactors. It forms dimeric complexes. Heme b is required as a cofactor.

The protein resides in the plastid. Its subcellular location is the chloroplast thylakoid membrane. Its function is as follows. This b-type cytochrome is tightly associated with the reaction center of photosystem II (PSII). PSII is a light-driven water:plastoquinone oxidoreductase that uses light energy to abstract electrons from H(2)O, generating O(2) and a proton gradient subsequently used for ATP formation. It consists of a core antenna complex that captures photons, and an electron transfer chain that converts photonic excitation into a charge separation. This is Cytochrome b559 subunit beta from Oltmannsiellopsis viridis (Marine flagellate).